We begin with the raw amino-acid sequence, 200 residues long: Small ribosomal subunit protein eS8A (200 aa).

The tract at residues 1-31 is disordered; the sequence is MGISRDSRHKRSATGAKRAQFRKKRKFELGR. Residue threonine 62 is modified to Phosphothreonine. 4 positions are modified to phosphoserine: serine 66, serine 69, serine 73, and serine 86. Threonine 107 is subject to Phosphothreonine. Residues serine 154, serine 155, serine 158, and serine 161 each carry the phosphoserine modification.

This sequence belongs to the eukaryotic ribosomal protein eS8 family. Component of the small ribosomal subunit (SSU). Mature yeast ribosomes consist of a small (40S) and a large (60S) subunit. The 40S small subunit contains 1 molecule of ribosomal RNA (18S rRNA) and 33 different proteins (encoded by 57 genes). The large 60S subunit contains 3 rRNA molecules (25S, 5.8S and 5S rRNA) and 46 different proteins (encoded by 81 genes).

The protein localises to the cytoplasm. Functionally, component of the ribosome, a large ribonucleoprotein complex responsible for the synthesis of proteins in the cell. The small ribosomal subunit (SSU) binds messenger RNAs (mRNAs) and translates the encoded message by selecting cognate aminoacyl-transfer RNA (tRNA) molecules. The large subunit (LSU) contains the ribosomal catalytic site termed the peptidyl transferase center (PTC), which catalyzes the formation of peptide bonds, thereby polymerizing the amino acids delivered by tRNAs into a polypeptide chain. The nascent polypeptides leave the ribosome through a tunnel in the LSU and interact with protein factors that function in enzymatic processing, targeting, and the membrane insertion of nascent chains at the exit of the ribosomal tunnel. This is Small ribosomal subunit protein eS8A from Saccharomyces cerevisiae (strain ATCC 204508 / S288c) (Baker's yeast).